The sequence spans 450 residues: Probable 1,4-beta-D-glucan cellobiohydrolase C (450 aa).

An N-terminal signal peptide occupies residues 1–19 (MKHLASSIALTLLLPAVQA). The CBM1 domain maps to 20-55 (QQTVWGQCGGQGWSGPTNCVAGAACSTLNPYYAQCI). 2 disulfides stabilise this stretch: cysteine 27–cysteine 44 and cysteine 38–cysteine 54. The interval 59–90 (TATSTTLSTTTTTQTTTKPTTTGPTTSAPTVT) is thr-rich linker. The segment at 63 to 89 (TTLSTTTTTQTTTKPTTTGPTTSAPTV) is disordered. A catalytic region spans residues 91-450 (ASGNPFSGYQ…QLLTNANPSF (360 aa)). Aspartate 180 is a catalytic residue. Intrachain disulfides connect cysteine 181/cysteine 240 and cysteine 372/cysteine 419. Aspartate 226 acts as the Proton donor in catalysis. The Nucleophile role is filled by aspartate 405. Residue asparagine 409 is glycosylated (N-linked (GlcNAc...) asparagine).

Belongs to the glycosyl hydrolase 6 (cellulase B) family.

The protein resides in the secreted. It catalyses the reaction Hydrolysis of (1-&gt;4)-beta-D-glucosidic linkages in cellulose and cellotetraose, releasing cellobiose from the non-reducing ends of the chains.. Functionally, the biological conversion of cellulose to glucose generally requires three types of hydrolytic enzymes: (1) Endoglucanases which cut internal beta-1,4-glucosidic bonds; (2) Exocellobiohydrolases that cut the disaccharide cellobiose from the non-reducing end of the cellulose polymer chain; (3) Beta-1,4-glucosidases which hydrolyze the cellobiose and other short cello-oligosaccharides to glucose. This chain is Probable 1,4-beta-D-glucan cellobiohydrolase C (cbhC), found in Neosartorya fischeri (strain ATCC 1020 / DSM 3700 / CBS 544.65 / FGSC A1164 / JCM 1740 / NRRL 181 / WB 181) (Aspergillus fischerianus).